The chain runs to 1070 residues: Ubiquitin-protein ligase E3B (1070 aa).

Met-1 bears the N-acetylmethionine mark. An IQ domain is found at 29 to 58; that stretch reads RERSAVTIQALVRSFLCRRRLHRDIRKEID. A Phosphoserine modification is found at Ser-421. One can recognise an HECT domain in the interval 704-1070; sequence SQHAMKGVIR…ISMNTGFELS (367 aa). Cys-1038 (glycyl thioester intermediate) is an active-site residue.

In terms of tissue distribution, widely expressed. High expression is observed in developing central nervous system.

It localises to the postsynaptic density. It carries out the reaction S-ubiquitinyl-[E2 ubiquitin-conjugating enzyme]-L-cysteine + [acceptor protein]-L-lysine = [E2 ubiquitin-conjugating enzyme]-L-cysteine + N(6)-ubiquitinyl-[acceptor protein]-L-lysine.. It functions in the pathway protein modification; protein ubiquitination. Its function is as follows. E3 ubiquitin-protein ligase which accepts ubiquitin from an E2 ubiquitin-conjugating enzyme in the form of a thioester and then directly transfers the ubiquitin to targeted substrates. Ubiquitinates BCKDK and targets it for degradation, thereby regulating various metabolic processes. Involved in the positive regulation of neurite branching in hippocampal neurons and the control of neuronal spine number and morphology, through the ubiquitination of PPP3CC. This Mus musculus (Mouse) protein is Ubiquitin-protein ligase E3B (Ube3b).